We begin with the raw amino-acid sequence, 381 residues long: Creatine kinase B-type (381 aa).

S4 bears the Phosphoserine mark. The Phosphagen kinase N-terminal domain occupies 11 to 98; that stretch reads KLRFPAEDEF…FDPIIEDRHG (88 aa). T35 carries the post-translational modification Phosphothreonine. A Glycyl lysine isopeptide (Lys-Gly) (interchain with G-Cter in ubiquitin) cross-link involves residue K45. V72 is a creatine binding site. The segment covering 96–110 has biased composition (basic and acidic residues); that stretch reads RHGGYKPSDEHKTDL. Residues 96–123 form a disordered region; sequence RHGGYKPSDEHKTDLNPDNLQGGDDLDP. Glycyl lysine isopeptide (Lys-Gly) (interchain with G-Cter in ubiquitin) cross-links involve residues K101 and K107. The residue at position 125 (Y125) is a Phosphotyrosine. In terms of domain architecture, Phosphagen kinase C-terminal spans 125 to 367; that stretch reads YVLSSRVRTG…KLLIEMEQRL (243 aa). ATP contacts are provided by residues 128 to 132, R130, R132, and H191; that span reads SSRVR. Positions 130–138 are internal MTS-like signal; the sequence is RVRTGRSIR. A Phosphoserine modification is found at S199. E232 contributes to the creatine binding site. R236 contacts ATP. Y269 carries the post-translational modification 3'-nitrotyrosine. A creatine-binding site is contributed by S285. R292 contacts ATP. S309 carries the phosphoserine modification. Residues R320, 320-325, and D335 each bind ATP; that span reads RGTGGV. At T322 the chain carries Phosphothreonine. K381 is covalently cross-linked (Glycyl lysine isopeptide (Lys-Gly) (interchain with G-Cter in ubiquitin)).

It belongs to the ATP:guanido phosphotransferase family. As to quaternary structure, dimer of identical or non-identical chains, which can be either B (brain type) or M (muscle type). With MM being the major form in skeletal muscle and myocardium, MB existing in myocardium, and BB existing in many tissues, especially brain. Interacts with SLC12A6 (via C-terminus); the interaction may be required for SLC12A6 potassium-chloride cotransport activity. Post-translationally, ubiquitinated by the ECS(ASB9) complex, leading to its degradation by the proteasome.

Its subcellular location is the cytoplasm. It localises to the cytosol. The protein localises to the mitochondrion. The protein resides in the cell membrane. The catalysed reaction is creatine + ATP = N-phosphocreatine + ADP + H(+). Reversibly catalyzes the transfer of phosphate between ATP and various phosphogens (e.g. creatine phosphate). Creatine kinase isoenzymes play a central role in energy transduction in tissues with large, fluctuating energy demands, such as skeletal muscle, heart, brain and spermatozoa. Acts as a key regulator of adaptive thermogenesis as part of the futile creatine cycle: localizes to the mitochondria of thermogenic fat cells and acts by mediating phosphorylation of creatine to initiate a futile cycle of creatine phosphorylation and dephosphorylation. During the futile creatine cycle, creatine and N-phosphocreatine are in a futile cycle, which dissipates the high energy charge of N-phosphocreatine as heat without performing any mechanical or chemical work. In Oryctolagus cuniculus (Rabbit), this protein is Creatine kinase B-type (CKB).